A 358-amino-acid chain; its full sequence is Dual-specificity RNA methyltransferase RlmN (358 aa).

Glu91 acts as the Proton acceptor in catalysis. Residues Gly102 to Asp337 enclose the Radical SAM core domain. The cysteines at positions 109 and 342 are disulfide-linked. [4Fe-4S] cluster is bound by residues Cys116, Cys120, and Cys123. Residues Gly169–Glu170, Ser201, Ser223–His225, and Asn299 contribute to the S-adenosyl-L-methionine site. Cys342 functions as the S-methylcysteine intermediate in the catalytic mechanism.

This sequence belongs to the radical SAM superfamily. RlmN family. Requires [4Fe-4S] cluster as cofactor.

Its subcellular location is the cytoplasm. It carries out the reaction adenosine(2503) in 23S rRNA + 2 reduced [2Fe-2S]-[ferredoxin] + 2 S-adenosyl-L-methionine = 2-methyladenosine(2503) in 23S rRNA + 5'-deoxyadenosine + L-methionine + 2 oxidized [2Fe-2S]-[ferredoxin] + S-adenosyl-L-homocysteine. The catalysed reaction is adenosine(37) in tRNA + 2 reduced [2Fe-2S]-[ferredoxin] + 2 S-adenosyl-L-methionine = 2-methyladenosine(37) in tRNA + 5'-deoxyadenosine + L-methionine + 2 oxidized [2Fe-2S]-[ferredoxin] + S-adenosyl-L-homocysteine. In terms of biological role, specifically methylates position 2 of adenine 2503 in 23S rRNA and position 2 of adenine 37 in tRNAs. m2A2503 modification seems to play a crucial role in the proofreading step occurring at the peptidyl transferase center and thus would serve to optimize ribosomal fidelity. This Lawsonia intracellularis (strain PHE/MN1-00) protein is Dual-specificity RNA methyltransferase RlmN.